An 87-amino-acid polypeptide reads, in one-letter code: Small ribosomal subunit protein bS18B (87 aa).

This sequence belongs to the bacterial ribosomal protein bS18 family. Part of the 30S ribosomal subunit. Forms a tight heterodimer with protein bS6.

Binds as a heterodimer with protein bS6 to the central domain of the 16S rRNA, where it helps stabilize the platform of the 30S subunit. In Mycolicibacterium vanbaalenii (strain DSM 7251 / JCM 13017 / BCRC 16820 / KCTC 9966 / NRRL B-24157 / PYR-1) (Mycobacterium vanbaalenii), this protein is Small ribosomal subunit protein bS18B.